Reading from the N-terminus, the 598-residue chain is Probable pectinesterase/pectinesterase inhibitor 34 (598 aa).

The segment at 1-40 is disordered; it reads MGYERLGPSGATGSVTTSTTTAPILNQVSTSEQPENNNRR. A compositionally biased stretch (low complexity) spans 7–23; it reads GPSGATGSVTTSTTTAP. Residues 24 to 36 show a composition bias toward polar residues; it reads ILNQVSTSEQPEN. Residues 46–66 form a helical membrane-spanning segment; the sequence is VVSSIVLAISLILAAAIFAGV. The interval 81–232 is pectinesterase inhibitor 34; that stretch reads RKPSQAISKA…SELVSNCLAI (152 aa). The pectinesterase 34 stretch occupies residues 284–582; it reads DIIVSKDGNG…FTVAEFIYGS (299 aa). The substrate site is built by Thr360 and Gln390. Residue Asp413 is the Proton donor; for pectinesterase activity of the active site. A disulfide bridge links Cys427 with Cys447. Catalysis depends on Asp434, which acts as the Nucleophile; for pectinesterase activity. Residues Arg502 and Trp504 each coordinate substrate.

The protein in the N-terminal section; belongs to the PMEI family. It in the C-terminal section; belongs to the pectinesterase family. As to expression, expressed in siliques.

It is found in the membrane. It carries out the reaction [(1-&gt;4)-alpha-D-galacturonosyl methyl ester](n) + n H2O = [(1-&gt;4)-alpha-D-galacturonosyl](n) + n methanol + n H(+). The protein operates within glycan metabolism; pectin degradation; 2-dehydro-3-deoxy-D-gluconate from pectin: step 1/5. Functionally, acts in the modification of cell walls via demethylesterification of cell wall pectin. The chain is Probable pectinesterase/pectinesterase inhibitor 34 (PME34) from Arabidopsis thaliana (Mouse-ear cress).